The sequence spans 272 residues: Inositol monophosphatase (272 aa).

Residues E71, D90, I92, and D93 each contribute to the Mg(2+) site. E71 provides a ligand contact to substrate. Residues 92–95 (IDGT), 194–196 (GTA), E213, and D220 each bind substrate. D220 contacts Mg(2+).

Belongs to the inositol monophosphatase superfamily. The cofactor is Mg(2+).

It is found in the cytoplasm. It carries out the reaction a myo-inositol phosphate + H2O = myo-inositol + phosphate. The catalysed reaction is alpha-D-galactose 1-phosphate + H2O = D-galactose + phosphate. The protein operates within polyol metabolism; myo-inositol biosynthesis; myo-inositol from D-glucose 6-phosphate: step 2/2. With respect to regulation, inhibited by Li(+), Ca(2+) and Mn(2+), but also by Mg(2+) at concentrations above 3 mM. Functionally, responsible for the provision of inositol required for synthesis of phosphatidylinositol and polyphosphoinositides. Has broad substrate specificity and can use myo-inositol monophosphates, myo-inositol 1,3-diphosphate, myo-inositol 1,4-diphosphate, scyllo-inositol-phosphate, D-galactose 1-phosphate, glucose-1-phosphate, glucose-6-phosphate, fructose-1-phosphate, beta-glycerophosphate, and 2'-AMP as substrates. The protein is Inositol monophosphatase (impa1) of Dictyostelium discoideum (Social amoeba).